The sequence spans 521 residues: RING-type E3 ubiquitin-protein ligase PPIL2 (521 aa).

The region spanning 35-108 (RRLPFDHCSL…GQYHCPVLYS (74 aa)) is the U-box domain. Positions 197-217 (LKNTNSETRETLQELYKEFKG) form a coiled coil. K216 is covalently cross-linked (Glycyl lysine isopeptide (Lys-Gly) (interchain with G-Cter in SUMO2)). Residues 278-433 (KKGYVRLHTN…EEVLICTTTV (156 aa)) form the PPIase cyclophilin-type domain. Residues 447-462 (QERKKTQHQVDPEAKV) are compositionally biased toward basic and acidic residues. The segment at 447–521 (QERKKTQHQV…SRGFGDFSSW (75 aa)) is disordered. Over residues 465-478 (SQPQPGNQGPQTYR) the composition is skewed to polar residues. Position 483 is an N6-acetyllysine (K483).

This sequence belongs to the cyclophilin-type PPIase family. PPIL2 subfamily. Component of the minor spliceosome, which splices U12-type introns. Within this complex, interacts with PRPF8/PRP8, EFTUD2/SNU114 and PLRG1. Interacts with isoform 2 of BSG. Interacts (via the PPIase cyclophilin-type domain) with CRNKL1; they may form a trimeric complex with HSP90.

The protein localises to the nucleus. It catalyses the reaction S-ubiquitinyl-[E2 ubiquitin-conjugating enzyme]-L-cysteine + [acceptor protein]-L-lysine = [E2 ubiquitin-conjugating enzyme]-L-cysteine + N(6)-ubiquitinyl-[acceptor protein]-L-lysine.. It participates in protein modification; protein ubiquitination. Its function is as follows. Has a ubiquitin-protein ligase activity acting as an E3 ubiquitin protein ligase or as an ubiquitin-ubiquitin ligase promoting elongation of ubiquitin chains on substrates. By mediating 'Lys-48'-linked polyubiquitination of proteins could target them for proteasomal degradation. May also function as a chaperone, playing a role in transport to the cell membrane of BSG/Basigin for instance. Probable inactive PPIase with no peptidyl-prolyl cis-trans isomerase activity. As a component of the minor spliceosome, involved in the splicing of U12-type introns in pre-mRNAs. The sequence is that of RING-type E3 ubiquitin-protein ligase PPIL2 from Mus musculus (Mouse).